The chain runs to 365 residues: MCSTKKPIKLDLCASVKLTPFKPMRPPKPMQCWIHPRRANCKVTRPRNNYSDPDNENDMLHMTVLNSVFLNEHAKLYYRHLLRNDQAEARKTILNADSVYECMLIRPIRTEHFRSVDEAGEHNMSVLKIIIDAVIKYIGKLADDEYILIADRMYVDLIYSEFRAIILPQSAYIIKGDYAESDSESGQSVDVCNELEYPWKLITANNCIVSTDESRQSQYIYRTFLLYNTVLTAILKQNNPFDVIAENTSISIIVRNLGSCPNNKDRVKCCDLNYGGVPPGHVMCPPREITKKFFHYAKWVRNPNKYKRYSELIARQSETGGGSASLRENVNNQLHARDVSQLHLLDWENFMGEFSSYFGLHAHNV.

As to quaternary structure, interacts with C42 and VP80. Interacts with protein 38K.

The protein localises to the virion. Its function is as follows. Structural protein that participates in nucleocapsid assembly. Plays an essential role in the proper localization of the major capsid protein VP39, and the minor capsid protein 38K into the capsid assembly site. The polypeptide is Protein AC54 (AC54) (Lepidoptera (butterflies and moths)).